A 240-amino-acid chain; its full sequence is Probable septum site-determining protein MinC (240 aa).

Belongs to the MinC family. In terms of assembly, interacts with MinD and FtsZ.

Its function is as follows. Cell division inhibitor that blocks the formation of polar Z ring septums. Rapidly oscillates between the poles of the cell to destabilize FtsZ filaments that have formed before they mature into polar Z rings. Prevents FtsZ polymerization. The polypeptide is Probable septum site-determining protein MinC (Chromobacterium violaceum (strain ATCC 12472 / DSM 30191 / JCM 1249 / CCUG 213 / NBRC 12614 / NCIMB 9131 / NCTC 9757 / MK)).